Consider the following 292-residue polypeptide: GTP cyclohydrolase FolE2 (292 aa).

Belongs to the GTP cyclohydrolase IV family.

It carries out the reaction GTP + H2O = 7,8-dihydroneopterin 3'-triphosphate + formate + H(+). The protein operates within cofactor biosynthesis; 7,8-dihydroneopterin triphosphate biosynthesis; 7,8-dihydroneopterin triphosphate from GTP: step 1/1. Functionally, converts GTP to 7,8-dihydroneopterin triphosphate. The chain is GTP cyclohydrolase FolE2 from Staphylococcus aureus (strain Newman).